A 235-amino-acid chain; its full sequence is Claudin-16 (235 aa).

The Cytoplasmic segment spans residues 1 to 3 (MKD). A helical transmembrane segment spans residues 4–24 (LLQYAACFLAIFSTGFLIVAT). The Extracellular portion of the chain corresponds to 25–79 (WTDCWMVNADDSLEVSTKCRGLWWECVTNAFDGIRTCDEYDSIYAEHPLKLVVTR). A helical membrane pass occupies residues 80–100 (ALMITADILAGFGFITLLLGL). The Cytoplasmic portion of the chain corresponds to 101 to 115 (DCVKFLPDDPQIKVR). Residues 116 to 136 (LCFVAGTTLLIAGTPGIIGSV) form a helical membrane-spanning segment. Residues 137–169 (WYAVDVYVERSSLVLHNIFLGIQYKFGWSCWLG) lie on the Extracellular side of the membrane. The helical transmembrane segment at 170–190 (MAGSLGCFLAGALLTCCLYLF) threads the bilayer. Topologically, residues 191 to 235 (KDVGPERNYPYAMRKPYSTAGVSMAKSYKAPRTETAKMYAVDTRV) are cytoplasmic. Positions 233 to 235 (TRV) match the Interaction with TJP1 motif.

It belongs to the claudin family. Can form heteropolymeric tight junction strands with other claudins. Interacts with CLDN19. Cannot form tight junction strands on its own. Interacts (via PDZ-binding motif TRV) with TJP1 (via PDZ domain). In terms of tissue distribution, expressed in the corticomedullary axis of the TAL, specifically in the cortex and the outer stripe of outer medulla (OSOM) zone (at protein level).

Its subcellular location is the cell junction. It is found in the tight junction. The protein localises to the cell membrane. The enzyme catalyses Mg(2+)(in) = Mg(2+)(out). The catalysed reaction is Ca(2+)(in) = Ca(2+)(out). It catalyses the reaction Na(+)(in) = Na(+)(out). It carries out the reaction K(+)(in) = K(+)(out). The enzyme catalyses Rb(+)(in) = Rb(+)(out). The catalysed reaction is Cs(+)(in) = Cs(+)(out). It catalyses the reaction Li(+)(in) = Li(+)(out). Forms paracellular channels: coassembles with CLDN19 into tight junction strands with cation-selective channels through the strands, conveying epithelial permeability in a process known as paracellular tight junction permeability. Involved in the maintenance of ion gradients along the nephron. In the thick ascending limb (TAL) of Henle's loop, facilitates sodium paracellular permeability from the interstitial compartment to the lumen, contributing to the lumen-positive transepithelial potential that drives paracellular magnesium and calcium reabsorption. This chain is Claudin-16, found in Mus musculus (Mouse).